A 139-amino-acid chain; its full sequence is Transcription antitermination protein NusB (139 aa).

Belongs to the NusB family.

In terms of biological role, involved in transcription antitermination. Required for transcription of ribosomal RNA (rRNA) genes. Binds specifically to the boxA antiterminator sequence of the ribosomal RNA (rrn) operons. This Baumannia cicadellinicola subsp. Homalodisca coagulata protein is Transcription antitermination protein NusB.